The chain runs to 552 residues: Solute carrier family 22 member 6-B (552 aa).

The Cytoplasmic segment spans residues 1 to 16; that stretch reads MAFQEILESLGGMGRY. Residues 17-37 traverse the membrane as a helical segment; the sequence is QVIHVVLLSLPVFMLASHNLM. Residues 38-137 lie on the Extracellular side of the membrane; it reads QNFTAATPSH…LVCNHRRMRQ (100 aa). A helical membrane pass occupies residues 138–158; it reads VAQSIYMAGVLVGSILFGGLS. Residues 159-164 are Cytoplasmic-facing; that stretch reads DKFGRR. The chain crosses the membrane as a helical span at residues 165–184; it reads PLNIWSNLQMFVTGICAAFS. Position 185 (Pro185) is a topological domain, extracellular. Residues 186–206 traverse the membrane as a helical segment; that stretch reads NYIWYCIFRFLTGVAFSGIVL. Over 207–225 the chain is Cytoplasmic; sequence NSYSLTVEWIPTGNRAFTS. The helical transmembrane segment at 226–246 threads the bilayer; sequence TATGYCYTMGQLVLVGLAFII. The Extracellular segment spans residues 247–250; that stretch reads RDWQ. Residues 251 to 271 traverse the membrane as a helical segment; it reads WLQLAASIPFFFYFLYSWWIP. The Cytoplasmic portion of the chain corresponds to 272-336; that stretch reads ESGRWLVLSG…YSALDLVRTP (65 aa). The chain crosses the membrane as a helical span at residues 337–356; the sequence is VVRRISFCISCTWFSTSFAY. A topological domain (extracellular) is located at residue Tyr357. A helical membrane pass occupies residues 358 to 378; the sequence is GLALDLQSFGVSIYIIQIIFG. Topologically, residues 379 to 398 are cytoplasmic; it reads TVDIPAKFISYFITTYVGRR. The chain crosses the membrane as a helical span at residues 399–419; that stretch reads VSQAITLILAGIAILVNISVP. Over 420–426 the chain is Extracellular; that stretch reads QDFQTVR. A helical membrane pass occupies residues 427-447; that stretch reads TAMAVFGKGCLAASFNCLYLY. Residues 448–459 are Cytoplasmic-facing; sequence TGELYPTVIRQT. A helical membrane pass occupies residues 460 to 480; it reads GMGLGAMMARLGGIIAPLAQM. Topologically, residues 481 to 487 are extracellular; that stretch reads TGDIYHS. A helical transmembrane segment spans residues 488–508; it reads LPLIIFGCLPILSGIAGCFLP. Topologically, residues 509–552 are cytoplasmic; sequence ETLGVPLPETIEEVESPDKQQKDVNVSAKIPLKETELYNMKTDV.

Belongs to the major facilitator (TC 2.A.1) superfamily. Organic cation transporter (TC 2.A.1.19) family. In terms of processing, glycosylated. Glycosylation is necessary for proper targeting of the transporter to the plasma membrane.

Its subcellular location is the cell membrane. The protein resides in the basolateral cell membrane. The protein localises to the basal cell membrane. Involved in the renal elimination of endogenous and exogenous organic anions. Mediates the sodium-independent uptake of p-aminohippurate (PAH), cidofovir, adefovir, 9-(2-phosphonylmethoxyethyl) guanine (PMEG), 9-(2-phosphonylmethoxyethyl) diaminopurine (PMEDAP) and edaravone sulfate. PAH uptake is inhibited by furosemide, steviol, phorbol 12-myristate 13-acetate (PMA), calcium ionophore A23187, benzylpenicillin, furosemide, indomethacin, bumetamide, losartan, probenecid, phenol red, urate, and alpha-ketoglutarate. This is Solute carrier family 22 member 6-B (slc22a6-b) from Xenopus laevis (African clawed frog).